Reading from the N-terminus, the 165-residue chain is Lipoprotein signal peptidase (165 aa).

The next 3 membrane-spanning stretches (helical) occupy residues 9-29, 69-89, and 98-118; these read FLAI…VLLY, KYFL…FLFL, and IRFS…DILF. Catalysis depends on residues Asp124 and Asp142. A helical membrane pass occupies residues 133-153; it reads WYFPTFNFADIFISLGTFIFV.

It belongs to the peptidase A8 family.

It localises to the cell inner membrane. It carries out the reaction Release of signal peptides from bacterial membrane prolipoproteins. Hydrolyzes -Xaa-Yaa-Zaa-|-(S,diacylglyceryl)Cys-, in which Xaa is hydrophobic (preferably Leu), and Yaa (Ala or Ser) and Zaa (Gly or Ala) have small, neutral side chains.. It functions in the pathway protein modification; lipoprotein biosynthesis (signal peptide cleavage). This protein specifically catalyzes the removal of signal peptides from prolipoproteins. This Chlamydia caviae (strain ATCC VR-813 / DSM 19441 / 03DC25 / GPIC) (Chlamydophila caviae) protein is Lipoprotein signal peptidase.